The primary structure comprises 169 residues: Ribosome maturation factor RimM (169 aa).

The PRC barrel domain occupies E95 to L168.

The protein belongs to the RimM family. As to quaternary structure, binds ribosomal protein uS19.

The protein localises to the cytoplasm. Its function is as follows. An accessory protein needed during the final step in the assembly of 30S ribosomal subunit, possibly for assembly of the head region. Essential for efficient processing of 16S rRNA. May be needed both before and after RbfA during the maturation of 16S rRNA. It has affinity for free ribosomal 30S subunits but not for 70S ribosomes. The protein is Ribosome maturation factor RimM of Desulforamulus reducens (strain ATCC BAA-1160 / DSM 100696 / MI-1) (Desulfotomaculum reducens).